Reading from the N-terminus, the 471-residue chain is UDP-N-acetylmuramate--L-alanine ligase (471 aa).

Residue 114-120 (GTHGKTT) participates in ATP binding.

Belongs to the MurCDEF family.

It localises to the cytoplasm. The enzyme catalyses UDP-N-acetyl-alpha-D-muramate + L-alanine + ATP = UDP-N-acetyl-alpha-D-muramoyl-L-alanine + ADP + phosphate + H(+). It participates in cell wall biogenesis; peptidoglycan biosynthesis. Its function is as follows. Cell wall formation. The protein is UDP-N-acetylmuramate--L-alanine ligase of Rhizobium etli (strain ATCC 51251 / DSM 11541 / JCM 21823 / NBRC 15573 / CFN 42).